The primary structure comprises 255 residues: Putative deoxyribonuclease tatdn3-B (255 aa).

Zn(2+) is bound by residues histidine 11, histidine 13, glutamate 106, histidine 129, histidine 152, and aspartate 199.

The protein belongs to the metallo-dependent hydrolases superfamily. TatD-type hydrolase family. Requires Mn(2+) as cofactor. Ca(2+) is required as a cofactor. Mg(2+) serves as cofactor. It depends on Zn(2+) as a cofactor.

The protein resides in the nucleus. Its activity is regulated as follows. The 3'-exonuclease activity is sensitive to the metal ion present in the active site, whereas the AP endodeoxyribonuclease activity is observed in a variety of divalent metal cofactors. 3'-exoxonuclease activity is suppressed in the presence of Ca(2+), Zn(2+) and Ni(2+). Functionally, exhibits 3'-exonuclease activities and apurinic/apyrimidinic (AP) endonuclease (in vitro). Show preferential AP endonuclease activity on double-stranded DNA substrates and 3'- exonuclease activity on single-stranded DNA. The sequence is that of Putative deoxyribonuclease tatdn3-B (tatdn3-b) from Xenopus laevis (African clawed frog).